The sequence spans 201 residues: 3-isopropylmalate dehydratase small subunit (201 aa).

Belongs to the LeuD family. LeuD type 1 subfamily. In terms of assembly, heterodimer of LeuC and LeuD.

The enzyme catalyses (2R,3S)-3-isopropylmalate = (2S)-2-isopropylmalate. Its pathway is amino-acid biosynthesis; L-leucine biosynthesis; L-leucine from 3-methyl-2-oxobutanoate: step 2/4. Its function is as follows. Catalyzes the isomerization between 2-isopropylmalate and 3-isopropylmalate, via the formation of 2-isopropylmaleate. This Shewanella baltica (strain OS155 / ATCC BAA-1091) protein is 3-isopropylmalate dehydratase small subunit.